The primary structure comprises 1200 residues: Nuclear pore complex protein Nup133 (1200 aa).

Positions Met-1–Ala-28 are disordered.

It belongs to the nucleoporin Nup133 family. Forms part of the Nup107-Nup160 subcomplex in the nuclear pore.

It localises to the nucleus. The protein localises to the nuclear pore complex. Its function is as follows. Probable component of the nuclear pore complex (NPC). Plays a role in NPC assembly and/or maintenance. This Drosophila melanogaster (Fruit fly) protein is Nuclear pore complex protein Nup133.